Here is a 623-residue protein sequence, read N- to C-terminus: UvrABC system protein C (623 aa).

The GIY-YIG domain occupies 21-100; that stretch reads AEPGVYLMRD…IKTHQPPYNV (80 aa). Positions 210-245 constitute a UVR domain; it reads DELIRELQEKMIQAAEQENYEAAARYRDQIRGLEQL.

The protein belongs to the UvrC family. In terms of assembly, interacts with UvrB in an incision complex.

The protein resides in the cytoplasm. Functionally, the UvrABC repair system catalyzes the recognition and processing of DNA lesions. UvrC both incises the 5' and 3' sides of the lesion. The N-terminal half is responsible for the 3' incision and the C-terminal half is responsible for the 5' incision. The protein is UvrABC system protein C of Synechococcus sp. (strain JA-2-3B'a(2-13)) (Cyanobacteria bacterium Yellowstone B-Prime).